Here is a 72-residue protein sequence, read N- to C-terminus: Large ribosomal subunit protein bL28 (72 aa).

It belongs to the bacterial ribosomal protein bL28 family.

This Chlorobium phaeovibrioides (strain DSM 265 / 1930) (Prosthecochloris vibrioformis (strain DSM 265)) protein is Large ribosomal subunit protein bL28.